Consider the following 72-residue polypeptide: uncharacterized protein (72 aa).

This is an uncharacterized protein from Saccharomyces cerevisiae (strain ATCC 204508 / S288c) (Baker's yeast).